Reading from the N-terminus, the 326-residue chain is MDKNRRRTDDAGLMTKTLAGIAALVFFLSFICSSYDITVTHVISTIDVILEESEYYRSAKEWTASSIDATWNEVSIPSRKAEHIQAINPEVDVAAGGKHVFTPEQLHFFDGTRDSKPIYLAILGRVYNVDGKKEYYGPGKSYHHFAGRDATRAFTTGDFQESGLIATTHGLSHDELLSIRDWVSFYDKEYPLVGVVADLYYDSEGQPTPELTDVLARVEKANEYRKAQAVEIEVFPPCNSEYNQNGGRVWCSTKSGGVERQWAGVPRKLIEPTTEKFRCACVKNFGPGVSGAEEVKSSSNRGDLDHPDLELFPDCSPTSNSCKIVS.

The first 34 residues, 1–34 (MDKNRRRTDDAGLMTKTLAGIAALVFFLSFICSS), serve as a signal peptide directing secretion. A Cytochrome b5 heme-binding domain is found at 98 to 197 (KHVFTPEQLH…KEYPLVGVVA (100 aa)).

Belongs to the cytochrome b5 family. MAPR subfamily.

The protein localises to the secreted. In terms of biological role, heme-binding protein. The chain is Neuferricin homolog (tag-131) from Caenorhabditis elegans.